We begin with the raw amino-acid sequence, 361 residues long: D-alanine--D-alanine ligase (361 aa).

The ATP-grasp domain occupies 140–345 (KHLFAQAGLD…YAELIEKLVA (206 aa)). Position 173-228 (173-228 (EGELGYPCFVKPANLGSSVGISKCRSREELDQAFELAFQYDRKIVVEEGVIGREIE)) interacts with ATP. 3 residues coordinate Mg(2+): D299, E312, and N314.

Belongs to the D-alanine--D-alanine ligase family. Mg(2+) serves as cofactor. Mn(2+) is required as a cofactor.

The protein resides in the cytoplasm. It carries out the reaction 2 D-alanine + ATP = D-alanyl-D-alanine + ADP + phosphate + H(+). Its pathway is cell wall biogenesis; peptidoglycan biosynthesis. Cell wall formation. This Bacillus licheniformis (strain ATCC 14580 / DSM 13 / JCM 2505 / CCUG 7422 / NBRC 12200 / NCIMB 9375 / NCTC 10341 / NRRL NRS-1264 / Gibson 46) protein is D-alanine--D-alanine ligase.